The chain runs to 548 residues: Chaperonin GroEL (548 aa).

ATP-binding positions include 30–33, Lys51, 87–91, Gly415, 479–481, and Asp495; these read TLGP, DGTTT, and NAA.

This sequence belongs to the chaperonin (HSP60) family. As to quaternary structure, forms a cylinder of 14 subunits composed of two heptameric rings stacked back-to-back. Interacts with the co-chaperonin GroES.

The protein resides in the cytoplasm. It catalyses the reaction ATP + H2O + a folded polypeptide = ADP + phosphate + an unfolded polypeptide.. Its function is as follows. Together with its co-chaperonin GroES, plays an essential role in assisting protein folding. The GroEL-GroES system forms a nano-cage that allows encapsulation of the non-native substrate proteins and provides a physical environment optimized to promote and accelerate protein folding. The polypeptide is Chaperonin GroEL (Aliivibrio fischeri (strain MJ11) (Vibrio fischeri)).